The primary structure comprises 634 residues: 1-deoxy-D-xylulose-5-phosphate synthase (634 aa).

Thiamine diphosphate is bound by residues H74 and 115-117; that span reads AHS. D146 lines the Mg(2+) pocket. Thiamine diphosphate contacts are provided by residues 147 to 148, N176, Y283, and E365; that span reads GA. N176 contacts Mg(2+).

The protein belongs to the transketolase family. DXPS subfamily. As to quaternary structure, homodimer. Mg(2+) is required as a cofactor. It depends on thiamine diphosphate as a cofactor.

The enzyme catalyses D-glyceraldehyde 3-phosphate + pyruvate + H(+) = 1-deoxy-D-xylulose 5-phosphate + CO2. Its pathway is metabolic intermediate biosynthesis; 1-deoxy-D-xylulose 5-phosphate biosynthesis; 1-deoxy-D-xylulose 5-phosphate from D-glyceraldehyde 3-phosphate and pyruvate: step 1/1. Functionally, catalyzes the acyloin condensation reaction between C atoms 2 and 3 of pyruvate and glyceraldehyde 3-phosphate to yield 1-deoxy-D-xylulose-5-phosphate (DXP). The polypeptide is 1-deoxy-D-xylulose-5-phosphate synthase (Burkholderia thailandensis (strain ATCC 700388 / DSM 13276 / CCUG 48851 / CIP 106301 / E264)).